The primary structure comprises 201 residues: Large ribosomal subunit protein uL4 (201 aa).

The interval 45–71 (AQKTRAEVTGSGKKPWRQKGTGRARAG) is disordered.

This sequence belongs to the universal ribosomal protein uL4 family. Part of the 50S ribosomal subunit.

One of the primary rRNA binding proteins, this protein initially binds near the 5'-end of the 23S rRNA. It is important during the early stages of 50S assembly. It makes multiple contacts with different domains of the 23S rRNA in the assembled 50S subunit and ribosome. In terms of biological role, forms part of the polypeptide exit tunnel. The protein is Large ribosomal subunit protein uL4 of Shewanella sp. (strain MR-4).